The sequence spans 326 residues: Nucleotide sugar transporter SLC35D2 (326 aa).

Residues 1–15 (MEEPNAAPLPSRLAR) are Extracellular-facing. A helical transmembrane segment spans residues 16–36 (LLSALFYGTCSFLIVLVNKAL). Topologically, residues 37 to 41 (LTTYG) are cytoplasmic. The helical transmembrane segment at 42–62 (FPSPIVLGIGQMATTIMILYV) threads the bilayer. Residues 63 to 130 (FKLNKIIHFP…LLEAIILGTQ (68 aa)) are Extracellular-facing. The chain crosses the membrane as a helical span at residues 131–151 (YSLNIILSVLAIVLGAFIAAG). Topologically, residues 152 to 155 (SDLT) are cytoplasmic. Residues 156 to 176 (FNLEGYVFVFLNDIFTAANGV) form a helical membrane-spanning segment. Residues 177 to 189 (YTKQKMDPKELGK) are Extracellular-facing. Residues 190-210 (YGVLFYNACFMLIPTVIISVS) traverse the membrane as a helical segment. At 211-225 (TGDFQQATEFRHWKN) the chain is on the cytoplasmic side. A helical transmembrane segment spans residues 226–246 (VLFIIQFLLSCLLGFLLMYST). At 247 to 253 (ALCSYYN) the chain is on the extracellular side. Residues 254–276 (SALTTAVVGAIKNVSVAYIGMLV) form a helical membrane-spanning segment. The Cytoplasmic portion of the chain corresponds to 277–280 (GGDY). The helical transmembrane segment at 281–303 (IFSLLNFIGLNICMAGGLRYSFL) threads the bilayer. Topologically, residues 304-326 (TLSSQLKPKQPVDEESIPLDLKS) are extracellular.

It belongs to the TPT transporter family. SLC35D subfamily.

The protein resides in the golgi apparatus membrane. It catalyses the reaction UMP(out) + UDP-N-acetyl-alpha-D-glucosamine(in) = UMP(in) + UDP-N-acetyl-alpha-D-glucosamine(out). It carries out the reaction UMP(out) + UDP-alpha-D-glucose(in) = UMP(in) + UDP-alpha-D-glucose(out). Functionally, nucleotide sugar antiporter transporting UDP-N-acetylglucosamine (UDP-GlcNAc) and UDP-glucose (UDP-Glc) from the cytosol into the lumen of the Golgi in exchange of UMP. By supplying UDP-N-acetylglucosamine, a donor substrate to heparan sulfate synthases, probably takes part in the synthesis of these glycoconjugates. This chain is Nucleotide sugar transporter SLC35D2, found in Mus musculus (Mouse).